A 134-amino-acid polypeptide reads, in one-letter code: Putative nickel-responsive regulator (134 aa).

Ni(2+)-binding residues include His-78, His-89, His-91, and Cys-97.

The protein belongs to the transcriptional regulatory CopG/NikR family. Ni(2+) serves as cofactor.

Its function is as follows. Transcriptional regulator. The chain is Putative nickel-responsive regulator from Chlorobaculum tepidum (strain ATCC 49652 / DSM 12025 / NBRC 103806 / TLS) (Chlorobium tepidum).